A 227-amino-acid chain; its full sequence is uncharacterized protein (227 aa).

Helical transmembrane passes span 13 to 35 and 155 to 177; these read CVRAYAVFAIAIMVLTVAWFAFS and IFFRGCVVFLVMLTLTISSMVFL. The disordered stretch occupies residues 192–227; sequence GDARPRPAGPQGTARSRTDEAQVSPGTPPECPVSVF. The segment covering 217–227 has biased composition (pro residues); the sequence is GTPPECPVSVF.

The protein resides in the cell membrane. This is an uncharacterized protein from Treponema pallidum (strain Nichols).